We begin with the raw amino-acid sequence, 1183 residues long: Phospholipid-transporting ATPase FetA (1183 aa).

3 helical membrane-spanning segments follow: residues 96-116 (ISSLAWYTTVIPLIVVLSITG), 299-319 (VLVVWIFMFLGGMCFLLSIGH), and 348-368 (ALIFWSYFIVLNTMVPISLYV). The active-site 4-aspartylphosphate intermediate is D416. Residues D416, K417, T418, E519, F560, K583, R617, T697, G698, D699, R812, and K818 each coordinate ATP. D416 serves as a coordination point for Mg(2+). T418 is a binding site for Mg(2+). D838 contributes to the Mg(2+) binding site. 2 residues coordinate ATP: N841 and D842. D842 contributes to the Mg(2+) binding site. 6 helical membrane-spanning segments follow: residues 904-924 (FAFTLVHFWYAFFNGFSAQTV), 927-947 (IWFITFYNLIYTSLPVLGLSL), 981-1001 (CLLHGIYNSFVLFFVPMGTVF), 1014-1034 (FQSFSLLVQTTLIGVMTMQIA), 1049-1069 (WGSLGLYFCILILLCSDGLCL), and 1090-1110 (IWLCLILSTILCMIPLIGYNF).

The protein belongs to the cation transport ATPase (P-type) (TC 3.A.3) family. Type IV subfamily. It depends on Mg(2+) as a cofactor. As to expression, highly expressed in testis.

It localises to the cytoplasmic vesicle. The protein resides in the secretory vesicle. The protein localises to the acrosome membrane. The enzyme catalyses ATP + H2O + phospholipidSide 1 = ADP + phosphate + phospholipidSide 2.. Functionally, P4-ATPase flippase which catalyzes the hydrolysis of ATP coupled to the transport of aminophospholipids from the outer to the inner leaflet of various membranes and ensures the maintenance of asymmetric distribution of phospholipids. Phospholipid translocation also seems to be implicated in vesicle formation and in uptake of lipid signaling molecules. May play a role in phospholid transport across membranes and in acrosome formation. The protein is Phospholipid-transporting ATPase FetA (Atp8b5) of Mus musculus (Mouse).